Consider the following 23-residue polypeptide: Basic phospholipase A2 homolog Vur-S49 analog (23 aa).

A disordered region spans residues Ser-1–Ile-23.

Contains 7 disulfide bonds. In terms of tissue distribution, expressed by the venom gland.

It localises to the secreted. The protein is Basic phospholipase A2 homolog Vur-S49 analog of Vipera renardi (Steppe viper).